We begin with the raw amino-acid sequence, 380 residues long: Succinyl-diaminopimelate desuccinylase (380 aa).

Residue H71 coordinates Zn(2+). Residue D73 is part of the active site. Residue D104 coordinates Zn(2+). The active-site Proton acceptor is E138. Zn(2+)-binding residues include E139, E167, and H353.

It belongs to the peptidase M20A family. DapE subfamily. Homodimer. Zn(2+) serves as cofactor. Requires Co(2+) as cofactor.

It catalyses the reaction N-succinyl-(2S,6S)-2,6-diaminopimelate + H2O = (2S,6S)-2,6-diaminopimelate + succinate. It participates in amino-acid biosynthesis; L-lysine biosynthesis via DAP pathway; LL-2,6-diaminopimelate from (S)-tetrahydrodipicolinate (succinylase route): step 3/3. Catalyzes the hydrolysis of N-succinyl-L,L-diaminopimelic acid (SDAP), forming succinate and LL-2,6-diaminopimelate (DAP), an intermediate involved in the bacterial biosynthesis of lysine and meso-diaminopimelic acid, an essential component of bacterial cell walls. The sequence is that of Succinyl-diaminopimelate desuccinylase from Shewanella baltica (strain OS185).